Reading from the N-terminus, the 102-residue chain is Large ribosomal subunit protein bL21 (102 aa).

The protein belongs to the bacterial ribosomal protein bL21 family. As to quaternary structure, part of the 50S ribosomal subunit. Contacts protein L20.

Its function is as follows. This protein binds to 23S rRNA in the presence of protein L20. The chain is Large ribosomal subunit protein bL21 from Geobacillus thermodenitrificans (strain NG80-2).